The primary structure comprises 422 residues: 3-phosphoshikimate 1-carboxyvinyltransferase (422 aa).

3-phosphoshikimate contacts are provided by Lys20, Ser21, and Arg25. Residue Lys20 participates in phosphoenolpyruvate binding. Residues Gly90 and Arg118 each contribute to the phosphoenolpyruvate site. Residues Ser163, Ser164, Gln165, Ser191, Asp306, and Lys333 each coordinate 3-phosphoshikimate. Residue Gln165 coordinates phosphoenolpyruvate. The active-site Proton acceptor is the Asp306. The phosphoenolpyruvate site is built by Arg337 and Arg378.

It belongs to the EPSP synthase family. Monomer.

The protein resides in the cytoplasm. It carries out the reaction 3-phosphoshikimate + phosphoenolpyruvate = 5-O-(1-carboxyvinyl)-3-phosphoshikimate + phosphate. It functions in the pathway metabolic intermediate biosynthesis; chorismate biosynthesis. In terms of biological role, catalyzes the transfer of the enolpyruvyl moiety of phosphoenolpyruvate (PEP) to the 5-hydroxyl of shikimate-3-phosphate (S3P) to produce enolpyruvyl shikimate-3-phosphate and inorganic phosphate. This is 3-phosphoshikimate 1-carboxyvinyltransferase from Methanocella arvoryzae (strain DSM 22066 / NBRC 105507 / MRE50).